A 509-amino-acid polypeptide reads, in one-letter code: Ribonuclease Y (509 aa).

A helical membrane pass occupies residues 3-23; it reads WILYVILPAVCIILGWTIRWL. The KH domain maps to 199 to 284; the sequence is TVSTVSLPSD…EIVQKVTREI (86 aa). Residues 325-418 form the HD domain; it reads VLQHSKEVAI…VQIADAISAA (94 aa).

This sequence belongs to the RNase Y family.

It localises to the cell membrane. Functionally, endoribonuclease that initiates mRNA decay. The protein is Ribonuclease Y of Treponema denticola (strain ATCC 35405 / DSM 14222 / CIP 103919 / JCM 8153 / KCTC 15104).